A 319-amino-acid polypeptide reads, in one-letter code: Iron-sulfur cluster transfer protein NUBPL (319 aa).

The transit peptide at 1 to 38 (MGTWRRLLLFGGVSLRGGGAATVPPRGCRALGCGRQLL) directs the protein to the mitochondrion. Residue 75–82 (GKGGVGKS) participates in ATP binding.

It belongs to the Mrp/NBP35 ATP-binding proteins family. [4Fe-4S] cluster is required as a cofactor.

It is found in the mitochondrion. In terms of biological role, iron-sulfur cluster transfer protein involved in the assembly of the mitochondrial membrane respiratory chain NADH dehydrogenase (Complex I). May deliver one or more Fe-S clusters to complex I subunits. The sequence is that of Iron-sulfur cluster transfer protein NUBPL (Nubpl) from Mus musculus (Mouse).